Consider the following 780-residue polypeptide: Endonuclease MutS2 (780 aa).

Glycine 334–threonine 341 is a binding site for ATP. The region spanning isoleucine 706 to isoleucine 780 is the Smr domain.

Belongs to the DNA mismatch repair MutS family. MutS2 subfamily. As to quaternary structure, homodimer. Binds to stalled ribosomes, contacting rRNA.

Functionally, endonuclease that is involved in the suppression of homologous recombination and thus may have a key role in the control of bacterial genetic diversity. Its function is as follows. Acts as a ribosome collision sensor, splitting the ribosome into its 2 subunits. Detects stalled/collided 70S ribosomes which it binds and splits by an ATP-hydrolysis driven conformational change. Acts upstream of the ribosome quality control system (RQC), a ribosome-associated complex that mediates the extraction of incompletely synthesized nascent chains from stalled ribosomes and their subsequent degradation. Probably generates substrates for RQC. This Borreliella burgdorferi (strain ATCC 35210 / DSM 4680 / CIP 102532 / B31) (Borrelia burgdorferi) protein is Endonuclease MutS2.